Here is a 1098-residue protein sequence, read N- to C-terminus: PAN2-PAN3 deadenylation complex catalytic subunit PAN2 (1098 aa).

WD repeat units follow at residues A19–L58, T150–S190, P253–V293, and P300–N338. Residues P340 to S466 are linker. The tract at residues R417 to E442 is disordered. One can recognise a USP domain in the interval S466 to P839. The Exonuclease domain occupies I894–F1067. Residues D897, E899, D1006, and D1059 each contribute to the a divalent metal cation site.

The protein belongs to the peptidase C19 family. PAN2 subfamily. In terms of assembly, forms a heterotrimer with an asymmetric homodimer of the regulatory subunit PAN3 to form the poly(A)-nuclease (PAN) deadenylation complex. A divalent metal cation serves as cofactor.

The protein resides in the cytoplasm. It carries out the reaction Exonucleolytic cleavage of poly(A) to 5'-AMP.. With respect to regulation, positively regulated by the regulatory subunit PAN3. Its function is as follows. Catalytic subunit of the poly(A)-nuclease (PAN) deadenylation complex, one of two cytoplasmic mRNA deadenylases involved in mRNA turnover. PAN specifically shortens poly(A) tails of RNA and the activity is stimulated by poly(A)-binding protein PAB1. PAN deadenylation is followed by rapid degradation of the shortened mRNA tails by the CCR4-NOT complex. Deadenylated mRNAs are then degraded by two alternative mechanisms, namely exosome-mediated 3'-5' exonucleolytic degradation, or deadenylation-dependent mRNA decaping and subsequent 5'-3' exonucleolytic degradation by XRN1. May also be involved in post-transcriptional maturation of mRNA poly(A) tails. The protein is PAN2-PAN3 deadenylation complex catalytic subunit PAN2 of Meyerozyma guilliermondii (strain ATCC 6260 / CBS 566 / DSM 6381 / JCM 1539 / NBRC 10279 / NRRL Y-324) (Yeast).